A 241-amino-acid polypeptide reads, in one-letter code: Exosome complex component RRP41 homolog (241 aa).

M1 carries the N-acetylmethionine modification.

This sequence belongs to the RNase PH family. In terms of assembly, component of the RNA exosome complex. Interacts with RPP4.

It is found in the cytoplasm. The protein resides in the nucleus. The protein localises to the nucleolus. Functionally, non-catalytic component of the RNA exosome complex which has 3'-&gt;5' exoribonuclease activity and participates in a multitude of cellular RNA processing, maturation and degradation events. In vitro, is a processive phosphorolytic exonuclease and requires a single-stranded poly(A) tail on the substrate RNA for its activity. Can complement the growth defect of a yeast mutant lacking RRP41 exonuclease. Required for normal development of female gametophytes. The chain is Exosome complex component RRP41 homolog from Arabidopsis thaliana (Mouse-ear cress).